Consider the following 988-residue polypeptide: Voltage-gated delayed rectifier potassium channel KCNH5 (988 aa).

At 1–217 (MPGGKRGLVA…LHYCAFKTTW (217 aa)) the chain is on the cytoplasmic side. Positions 14 to 86 (TFLENIVRRS…TIEKVRQTFD (73 aa)) constitute a PAS domain. Residues 91 to 143 (NCFEVLLYKKNRTPVWFYMQIAPIRNEHEKVVLFLCTFKDITLFKQPIEDDST) form the PAC domain. A helical transmembrane segment spans residues 218–238 (DWVILILTFYTAIMVPYNVSF). Topologically, residues 239-243 (KTKQN) are extracellular. Residues 244-264 (NIAWLVLDSVVDVIFLVDIVL) traverse the membrane as a helical segment. Topologically, residues 265–291 (NFHTTFVGPGGEVISDPKLIRMNYLKT) are cytoplasmic. A helical membrane pass occupies residues 292 to 312 (WFVIDLLSCLPYDIINAFENV). The Extracellular segment spans residues 313 to 319 (DEGISSL). The chain crosses the membrane as a helical; Voltage-sensor span at residues 320–340 (FSSLKVVRLLRLGRVARKLDH). The Cytoplasmic portion of the chain corresponds to 341–346 (YLEYGA). The helical transmembrane segment at 347-367 (AVLVLLVCVFGLVAHWLACIW) threads the bilayer. Topologically, residues 368–419 (YSIGDYEVIDEVTNTIQIDSWLYQLALSIGTPYRYNTSAGIWEGGPSKDSLY) are extracellular. Residue N403 is glycosylated (N-linked (GlcNAc...) asparagine). The pore-forming intramembrane region spans 420–440 (VSSLYFTMTSLTTIGFGNIAP). A Selectivity filter motif is present at residues 432–437 (TIGFGN). Over 441-446 (TTDVEK) the chain is Extracellular. A helical transmembrane segment spans residues 447 to 467 (MFSVAMMMVGSLLYATIFGNV). At 468 to 988 (TTIFQQMYAN…PESDKDEINF (521 aa)) the chain is on the cytoplasmic side. 550 to 667 (AFRLASDGCL…NSFSRNLTLT (118 aa)) lines the a nucleoside 3',5'-cyclic phosphate pocket. The segment at 704 to 715 (HPVRKLFQKFKQ) is calmodulin-binding. Residues 718 to 742 (ELRNQGSAQSDPERSQLQVESRPLQ) form a disordered region. A compositionally biased stretch (polar residues) spans 721–742 (NQGSAQSDPERSQLQVESRPLQ). K785 participates in a covalent cross-link: Glycyl lysine isopeptide (Lys-Gly) (interchain with G-Cter in ubiquitin). Disordered regions lie at residues 839 to 897 (LLSE…AKHP) and 946 to 965 (SVPQ…PPQI). Positions 871–885 (SDLRLDKAGEARSPL) are enriched in basic and acidic residues. At S883 the chain carries Phosphoserine. The segment at 909 to 948 (TLQEVKHELKEDIQLLSCRMTALEKQVAEILKLLSEKSVP) is CAD (involved in subunit assembly).

It belongs to the potassium channel family. H (Eag) (TC 1.A.1.20) subfamily. Kv10.2/KCNH5 sub-subfamily. As to quaternary structure, homotetramer. The potassium channel is probably composed of a homo- or heterotetrameric complex of pore-forming alpha subunits that can associate with modulating beta subunits. Heteromultimer with KCNH1/EAG. As to expression, detected in adult testis and in embryonic and adult brain, but not in other tissues. Highly expressed in specific brain areas, such as neocortex, olfactory bulb, primary olfactory cortex and brain stem. In cortex, expression is concentrated in a narrow band toward the middle lamella (layer IV). Moderately expressed in spinal cord, dorsal thalamic nuclei, medial hypothalamus, colliculus, lateral lemniscus, pontine nuclei and Islands of Calleja.

Its subcellular location is the membrane. It carries out the reaction K(+)(in) = K(+)(out). Its activity is regulated as follows. Inhibited by low nanomolar concentrations of cytosolic calcium. Its function is as follows. Pore-forming (alpha) subunit of a voltage-gated delayed rectifier potassium channel that mediates outward-rectifying potassium currents which, on depolarization, reaches a steady-state level and do not inactivate. The kinetic is characterized by a slow activation time course and a small voltage dependence of the activation time constants, therefore, starts to open at more negative voltages. The activation kinetics depend on the prepulse potential and external divalent cation concentration. The time course of activation is biphasic with a fast and a slowly activating current component. With negative prepulses, the current activation is delayed and slowed down several fold, whereas more positive prepulses speed up activation, therefore the activation rate depends on holding potential. The polypeptide is Voltage-gated delayed rectifier potassium channel KCNH5 (Rattus norvegicus (Rat)).